A 1873-amino-acid chain; its full sequence is Girdin (1873 aa).

Positions 12–132 constitute a Calponin-homology (CH) domain; sequence QFMTSPLVTW…KLLLLLLGCA (121 aa). The stretch at 196-425 forms a coiled coil; the sequence is HLRRLIDERD…EMAQKQSMDE (230 aa). A phosphoserine mark is found at Ser-233, Ser-237, and Ser-449. Coiled-coil stretches lie at residues 458-1232 and 1268-1385; these read TSSK…ESKN and HKNL…KFYD. Disordered regions lie at residues 816–841 and 1013–1034; these read ENKSLEQETSQLEKDKKQLEKENKRL and EERMVQSSIPVSGEDDKWGRES. A Phosphoserine modification is found at Ser-1020. Ser-1387 is subject to Phosphoserine. Residues 1390 to 1408 form a phosphoinositide-binding region; that stretch reads RRRGNWITLKMRKLIKSKK. Over residues 1407-1416 the composition is skewed to basic and acidic residues; sequence KKDINRERQK. Disordered stretches follow at residues 1407–1459, 1560–1602, and 1616–1643; these read KKDI…LGTK, TTSF…SNNN, and QSRPQSHSSGDFSLLHDHETWSSSGSSP. A Phosphoserine; by PKB/AKT1 modification is found at Ser-1417. Polar residues-rich tracts occupy residues 1417–1430, 1445–1459, 1560–1579, and 1616–1626; these read SLTLTPTRSDSSEG, VGSNSLEDGQTLGTK, TTSFEDISPQGISDDSSTGS, and QSRPQSHSSGD. Phosphothreonine is present on Thr-1421. The short motif at 1674 to 1704 is the GBA element; the sequence is KAGSPGSEVVTLQQFLEESNKLTSIQLKSSS. Ser-1677, Ser-1692, and Ser-1719 each carry phosphoserine. The interval 1715–1825 is SH2-like; required for interaction with growth factor receptors; the sequence is SLSVSSDFLG…GTTRRTSIHD (111 aa). The interval 1738–1873 is disordered; it reads SGKTPGDFYD…KSRSREQQSS (136 aa). Residues 1745-1755 show a composition bias toward basic and acidic residues; sequence FYDRRTTKPEF. Tyr-1767 carries the phosphotyrosine modification. Composition is skewed to polar residues over residues 1768-1781, 1789-1801, and 1809-1820; these read TISSAGKPTPSTQG, TSVSRQSKDSNPY, and SVISTAEGTTRR. Tyr-1801 bears the Phosphotyrosine mark. Ser-1822 and Ser-1839 each carry phosphoserine. A compositionally biased stretch (basic and acidic residues) spans 1822–1832; that stretch reads SIHDFLSKDSR. The segment covering 1839 to 1852 has biased composition (low complexity); that stretch reads SSPPTAGSSSTTAS. Residues 1858–1873 are compositionally biased toward basic and acidic residues; the sequence is QESRNSKSRSREQQSS.

This sequence belongs to the CCDC88 family. In terms of assembly, homodimer. Interacts (via GBA motif) with guanine nucleotide-binding protein G(i) alpha subunits GNAI1, GNAI2 and GNAI3. Also interacts (via GNA motif) with guanine nucleotide-binding protein G(s) alpha subunit GNAS. Interaction with G(i) alpha subunits occurs before interaction with GNAS and is regulated by phosphorylation; phosphorylation at Ser-1677 enhances binding to G(i) alpha subunits while phosphorylation at Ser-1692 abolishes G(i) alpha subunit binding, promoting binding to GNAS. Interacts (via C-terminal SH2-like region) with growth factor receptors EGFR, INSR and KDR/VEGFR2 (via their autophosphorylated cytoplasmic tails). Forms a complex with EGFR and GNAI3 which leads to enhanced EGFR signaling and triggering of cell migration; ligand stimulation is required for recruitment of GNAI3 to the complex. Interacts (tyrosine-phosphorylated form) with phosphatidylinositol 3-kinase (PI3K) regulatory subunit PIK3R1/p85a (via SH2 domains); the interaction enables recruitment of PIK3R1 to the EGFR receptor, enhancing PI3K activity and cell migration. Interacts with serine/threonine-protein kinase PRKCQ; the interaction leads to phosphorylation of CCDC88A and inhibition of its guanine nucleotide exchange factor activity. Interacts (via C-terminus) with DISC1; the interaction is direct. Interacts with AKT proteins; the interaction is inhibited in the presence of DISC1. Interacts with AKT1/PKB (via C-terminus). The non-phosphorylated form interacts with phosphatidylinositol 4-phosphate [Pi(4)P] and weakly with phosphatidylinositol 3-phosphate [Pi(3)P]. Interacts with microtubules. Interacts with actin. Phosphorylation is induced by epidermal growth factor (EGF) in a phosphoinositide 3-kinase (PI3K)-dependent manner. Phosphorylation by AKT1/PKB is necessary for the delocalization from the cell membrane and for cell migration. Phosphorylated on tyrosine residues which promotes binding to phosphatidylinositol 3-kinase (PI3K) regulatory subunit PIK3R1/p85a and enhances PI3K activity. Tyrosine-phosphorylated by both receptor and non-receptor tyrosine kinases in vitro. Tyrosine phosphorylation is required for AKT1-dependent phosphorylation of Ser-1417. Phosphorylation at Ser-1692 by PRKCQ disrupts interaction with GNAI3 and inhibits guanine nucleotide exchange factor activity. In terms of tissue distribution, expressed in the dentate gyrus, pyramidal cell layer of hippocampal regions CA1 and CA3 at postnatal 15. Expressed highly in neurons. Weakly in neuron progenitors (at protein level). Expressed in the dentate granule cell layer of the hippocampus. Expressed highly in the adult testis, moderately in the brain and at a low level in the spleen, lungs and fat.

Its subcellular location is the cell membrane. It is found in the cytoplasm. It localises to the cytosol. The protein localises to the cytoplasmic vesicle. The protein resides in the cell projection. Its subcellular location is the lamellipodium. It is found in the cytoskeleton. It localises to the cilium basal body. The protein localises to the microtubule organizing center. The protein resides in the centrosome. Its subcellular location is the centriole. Bifunctional modulator of guanine nucleotide-binding proteins (G proteins). Acts as a non-receptor guanine nucleotide exchange factor which binds to and activates guanine nucleotide-binding protein G(i) alpha subunits. Also acts as a guanine nucleotide dissociation inhibitor for guanine nucleotide-binding protein G(s) subunit alpha GNAS. Essential for cell migration. Interacts in complex with G(i) alpha subunits with the EGFR receptor, retaining EGFR at the cell membrane following ligand stimulation and promoting EGFR signaling which triggers cell migration. Binding to Gi-alpha subunits displaces the beta and gamma subunits from the heterotrimeric G-protein complex which enhances phosphoinositide 3-kinase (PI3K)-dependent phosphorylation and kinase activity of AKT1/PKB. Phosphorylation of AKT1/PKB induces the phosphorylation of downstream effectors GSK3 and FOXO1/FKHR, and regulates DNA replication and cell proliferation. Binds in its tyrosine-phosphorylated form to the phosphatidylinositol 3-kinase (PI3K) regulatory subunit PIK3R1 which enables recruitment of PIK3R1 to the EGFR receptor, enhancing PI3K activity and cell migration. Plays a role as a key modulator of the AKT-mTOR signaling pathway, controlling the tempo of the process of newborn neuron integration during adult neurogenesis, including correct neuron positioning, dendritic development and synapse formation. Inhibition of G(s) subunit alpha GNAS leads to reduced cellular levels of cAMP and suppression of cell proliferation. Essential for the integrity of the actin cytoskeleton. Required for formation of actin stress fibers and lamellipodia. May be involved in membrane sorting in the early endosome. Plays a role in ciliogenesis and cilium morphology and positioning and this may partly be through regulation of the localization of scaffolding protein CROCC/Rootletin. The sequence is that of Girdin (Ccdc88a) from Mus musculus (Mouse).